A 186-amino-acid polypeptide reads, in one-letter code: MANKLFLVSATLALFFLLTNASVYRTVVEVDEDDATNPAGPFRIPKCRKEFQQAQHLRACQQWLHKQAMQPGGGSGPSWTLDGEFDFEDDVENQQQGPQQRPPPPQQCCNELHQEEPLCVCPTLKGASKAVRQQVRQQQGQQMQGQQMQQVISRVYQTATHLPRVCNIRQVSICPFQKTMPGPGFY.

The first 21 residues, 1-21 (MANKLFLVSATLALFFLLTNA), serve as a signal peptide directing secretion. 2 propeptides span residues 22-38 (SVYR…ATNP) and 77-97 (PSWT…QQQG).

Belongs to the 2S seed storage albumins family. In terms of assembly, the mature protein consists of a small and a large chain linked by disulfide bonds. Cotyledons and the axis.

Functionally, the small, basic, water-soluble napins are one of the two major kinds of storage proteins synthesized in the seed during its maturation. The protein is Napin embryo-specific of Brassica napus (Rape).